The following is a 462-amino-acid chain: tRNA-2-methylthio-N(6)-dimethylallyladenosine synthase (462 aa).

The 117-residue stretch at 28–144 (KKLFVKTYGC…LPKMMEAVNA (117 aa)) folds into the MTTase N-terminal domain. Residues Cys-37, Cys-73, Cys-107, Cys-181, Cys-185, and Cys-188 each coordinate [4Fe-4S] cluster. Residues 167–398 (ATRGPTAFLT…QALLTQQQRA (232 aa)) enclose the Radical SAM core domain. Positions 401 to 462 (DAMVGRRVKV…KTNSLTGRLV (62 aa)) constitute a TRAM domain.

This sequence belongs to the methylthiotransferase family. MiaB subfamily. As to quaternary structure, monomer. It depends on [4Fe-4S] cluster as a cofactor.

The protein localises to the cytoplasm. It catalyses the reaction N(6)-dimethylallyladenosine(37) in tRNA + (sulfur carrier)-SH + AH2 + 2 S-adenosyl-L-methionine = 2-methylsulfanyl-N(6)-dimethylallyladenosine(37) in tRNA + (sulfur carrier)-H + 5'-deoxyadenosine + L-methionine + A + S-adenosyl-L-homocysteine + 2 H(+). Functionally, catalyzes the methylthiolation of N6-(dimethylallyl)adenosine (i(6)A), leading to the formation of 2-methylthio-N6-(dimethylallyl)adenosine (ms(2)i(6)A) at position 37 in tRNAs that read codons beginning with uridine. This Jannaschia sp. (strain CCS1) protein is tRNA-2-methylthio-N(6)-dimethylallyladenosine synthase.